The following is a 1143-amino-acid chain: uncharacterized protein (1143 aa).

The signal sequence occupies residues 1 to 20; it reads MKLLLLALILVLSNINLISG. At 21–1121 the chain is on the extracellular side; sequence NGLVWPHPRL…PAAGGEDSSA (1101 aa). Gly residues predominate over residues 177-203; it reads NSGGSWSSGGSGNSGGGWSSGGSGNSG. The segment at 177–1120 is disordered; it reads NSGGSWSSGG…EPAAGGEDSS (944 aa). The segment covering 222-236 has biased composition (low complexity); sequence SSGGWTSGSHSSGSW. Residues 237–283 are compositionally biased toward gly residues; it reads SSGGGSGSSSGGQSSGSWSSGGGSSSGGHSSGSWSSGGGSSAGGGSS. The segment covering 284–296 has biased composition (low complexity); sequence SGSHSSGSWSSGG. Residues 297–330 are compositionally biased toward gly residues; sequence SSSGGQSSGSWSSGGGSSSGGQSSGSWSSGGGSS. Residues 331–368 are compositionally biased toward low complexity; sequence SGSHSSGSWSSGGSSSGSHSSGSWSSGGSSSSSGNSGW. Over residues 374–392 the composition is skewed to gly residues; the sequence is GNTGGNTGGNTGGNTGGQS. Low complexity predominate over residues 393–403; that stretch reads SGNSGWMTASG. Composition is skewed to gly residues over residues 404–418 and 430–444; these read GNTG…GGQS. Composition is skewed to low complexity over residues 445–498 and 506–541; these read SGSS…TSSG and GSSS…SSGD. 6 stretches are compositionally biased toward gly residues: residues 555 to 573, 580 to 596, 604 to 622, 629 to 783, 790 to 843, and 851 to 905; these read GNTG…GGNS, GNSG…GGNS, and GNSG…GGAS. Over residues 906-1059 the composition is skewed to low complexity; sequence GAATGANSGA…GGNGASGAAN (154 aa). A compositionally biased stretch (polar residues) spans 1062-1078; sequence SIVTPNDQNVSPLSNSD. Residues 1094–1114 show a composition bias toward low complexity; it reads PTSRAPTVTPTPTSSAEEPAA. Residues 1122-1142 form a helical membrane-spanning segment; that stretch reads ISKYSIQSFGIFVLSMIIYLV. Ile1143 is a topological domain (cytoplasmic).

The protein resides in the membrane. This is an uncharacterized protein from Dictyostelium discoideum (Social amoeba).